The following is a 779-amino-acid chain: Lon protease (779 aa).

The Lon N-terminal domain occupies 7–190; sequence VPVLFLNDSI…LLIGWTGDHL (184 aa). 352 to 359 contacts ATP; the sequence is GPPGVGKT. The Lon proteolytic domain maps to 589-769; that stretch reads TAVPGVATGL…ADIIAAALEP (181 aa). Residues serine 675 and lysine 718 contribute to the active site.

The protein belongs to the peptidase S16 family. In terms of assembly, homohexamer. Organized in a ring with a central cavity. Oligomerization is Mg(2+)-dependent.

It localises to the cytoplasm. The enzyme catalyses Hydrolysis of proteins in presence of ATP.. With respect to regulation, stimulated by unfolded protein. ATP-dependent serine protease that mediates the selective degradation of mutant and abnormal proteins as well as certain short-lived regulatory proteins. Required for cellular homeostasis and for survival from DNA damage and developmental changes induced by stress. Degrades polypeptides processively to yield small peptide fragments that are 5 to 10 amino acids long. Binds to DNA in a double-stranded, site-specific manner. The sequence is that of Lon protease from Mycolicibacterium smegmatis (Mycobacterium smegmatis).